The following is a 29-amino-acid chain: uncharacterized protein (29 aa).

A helical membrane pass occupies residues phenylalanine 7–alanine 27.

It is found in the cell inner membrane. This is an uncharacterized protein from Escherichia coli O6:K15:H31 (strain 536 / UPEC).